A 259-amino-acid chain; its full sequence is UPF0246 protein SG0407 (259 aa).

The protein belongs to the UPF0246 family.

The protein is UPF0246 protein SG0407 of Sodalis glossinidius (strain morsitans).